The following is a 249-amino-acid chain: Probable WRKY transcription factor 64 (249 aa).

A DNA-binding region (WRKY) is located at residues 97–165 (SPTPRPDDGF…YLGKHVCKAV (69 aa)).

It belongs to the WRKY group III family.

It localises to the nucleus. In terms of biological role, transcription factor. Interacts specifically with the W box (5'-(T)TGAC[CT]-3'), a frequently occurring elicitor-responsive cis-acting element. The polypeptide is Probable WRKY transcription factor 64 (WRKY64) (Arabidopsis thaliana (Mouse-ear cress)).